A 415-amino-acid polypeptide reads, in one-letter code: Putative FNIP repeat-containing protein L415 (415 aa).

One copy of the FNIP repeat lies at 148–185 (FIKKGAIPDSVTHLYFGSDYLSKDIIPKNVVYLRFGDF).

This Acanthamoeba polyphaga mimivirus (APMV) protein is Putative FNIP repeat-containing protein L415.